The chain runs to 724 residues: Long-chain-fatty-acid--CoA ligase ACSBG1 (724 aa).

The disordered stretch occupies residues 1-51; the sequence is MPRNSGAGYGCPHGDPSMLDSRETPQESRQDMTVGTTQEKLKTSSLTDRQP. Positions 20 to 30 are enriched in basic and acidic residues; that stretch reads DSRETPQESRQ. Positions 31–51 are enriched in polar residues; that stretch reads DMTVGTTQEKLKTSSLTDRQP. Ser53 and Ser56 each carry phosphoserine. Residues 282–290, 472–477, Asp550, and Arg565 each bind ATP; these read TSGTTGNPK and AGYGLS. The residue at position 658 (Tyr658) is a Phosphotyrosine. Lys701 is an ATP binding site.

This sequence belongs to the ATP-dependent AMP-binding enzyme family. Bubblegum subfamily.

It is found in the cytoplasm. The protein resides in the cytoplasmic vesicle. Its subcellular location is the microsome. It localises to the endoplasmic reticulum. The protein localises to the cell membrane. It carries out the reaction a long-chain fatty acid + ATP + CoA = a long-chain fatty acyl-CoA + AMP + diphosphate. It catalyses the reaction (E)-hexadec-2-enoate + ATP + CoA = (2E)-hexadecenoyl-CoA + AMP + diphosphate. The catalysed reaction is hexadecanoate + ATP + CoA = hexadecanoyl-CoA + AMP + diphosphate. In terms of biological role, catalyzes the conversion of fatty acids such as long-chain and very long-chain fatty acids to their active form acyl-CoAs for both synthesis of cellular lipids, and degradation via beta-oxidation. Can activate diverse saturated, monosaturated and polyunsaturated fatty acids. This is Long-chain-fatty-acid--CoA ligase ACSBG1 from Macaca fascicularis (Crab-eating macaque).